The chain runs to 535 residues: Xylan 1,3-beta-xylosidase (535 aa).

Asp-16 serves as the catalytic Proton acceptor. The active-site Proton donor is the Glu-189.

This sequence belongs to the glycosyl hydrolase 43 family.

It catalyses the reaction Hydrolysis of successive xylose residues from the non-reducing termini of (1-&gt;3)-beta-D-xylans.. Inhibited by Ag(+), Cu(2+), Hg(2+), Mn(2+), Pb(2+), Zn(2+) and p-chloromercuric benzoic acid. Its function is as follows. Beta-1,3-xylosidase that hydrolyzes beta-1,3-xylooligosaccharides to D-xylose. In Vibrio sp, this protein is Xylan 1,3-beta-xylosidase (xloA).